The following is a 51-amino-acid chain: Photosystem I reaction center subunit IX (51 aa).

Residues 17 to 37 (FFSTAPVIALVFFTLTAGFLV) form a helical membrane-spanning segment.

It belongs to the PsaJ family.

It is found in the cellular thylakoid membrane. May help in the organization of the PsaE and PsaF subunits. This chain is Photosystem I reaction center subunit IX, found in Acaryochloris marina (strain MBIC 11017).